The sequence spans 212 residues: Phosphoenolpyruvate guanylyltransferase (212 aa).

Residues T139, G155, and S158 each coordinate phosphoenolpyruvate.

The protein belongs to the CofC family.

It carries out the reaction phosphoenolpyruvate + GTP + H(+) = enolpyruvoyl-2-diphospho-5'-guanosine + diphosphate. It functions in the pathway cofactor biosynthesis; coenzyme F420 biosynthesis. Its function is as follows. Guanylyltransferase that catalyzes the activation of phosphoenolpyruvate (PEP) as enolpyruvoyl-2-diphospho-5'-guanosine, via the condensation of PEP with GTP. It is involved in the biosynthesis of coenzyme F420, a hydride carrier cofactor. This Streptomyces coelicolor (strain ATCC BAA-471 / A3(2) / M145) protein is Phosphoenolpyruvate guanylyltransferase.